Here is a 566-residue protein sequence, read N- to C-terminus: MGFLIRRLPKDSRIFRWLLILTVFSFIITSFSALFGMEKSIFRQLKIYQSIAHMLQVDTQDQQGSNYSANGRISKVGLERDIAWLELNTAVSTPSGEGKEEQKKTVKPVAKVEEAKEKVTVKPFPEVMGITNTTASTASVVERTKEKTTARPVPGVGEADGKRTTIALPSMKEDKEKATVKPSFGMKVAHANSTSKDKPKAEEPPASVKAIRPVTQAATVTEKKKLRAADFKTEPQWDFDDEYILDSSSPVSTCSESVRAKAAKSDWLRDLFLPNITLFIDKSYFNVSEWDRLEHFAPPYGFMELNYSLVEEVMSRLPPNPHQQLLLANSSSNVSTCISCAVVGNGGILNNSGMGQEIDSHDYVFRVSGAVIKGYEKDVGTKTSFYGFTAYSLVSSLQNLGHKGFKKIPQGKHIRYIHFLEAVRDYEWLKALLLDKDIRKGFLNYYGRRPRERFDEDFTMNKYLVAHPDFLRYLKNRFLKSKNLQKPYWRLYRPTTGALLLLTALHLCDRVSAYGYITEGHQKYSDHYYDKEWKRLVFYVNHDFNLEKQVWKRLHDENIMKLYQRS.

Topologically, residues 1–16 are cytoplasmic; it reads MGFLIRRLPKDSRIFR. A helical; Signal-anchor for type II membrane protein membrane pass occupies residues 17-37; sequence WLLILTVFSFIITSFSALFGM. The Lumenal segment spans residues 38-566; the sequence is EKSIFRQLKI…ENIMKLYQRS (529 aa). Residues Asn-66 and Asn-132 are each glycosylated (N-linked (GlcNAc...) asparagine). The interval 138-161 is disordered; sequence ASVVERTKEKTTARPVPGVGEADG. Asn-192 is a glycosylation site (N-linked (GlcNAc...) asparagine). Residues 247-254 form repeat 1; the sequence is SSSPVSTC. The segment at 247-337 is 2 X 8 AA repeats of S-S-S-X-V-S-T-C; the sequence is SSSPVSTCSE…ANSSSNVSTC (91 aa). Cystine bridges form between Cys-254/Cys-337 and Cys-340/Cys-508. Residues Asn-275, Asn-286, Asn-306, Asn-329, and Asn-333 are each glycosylated (N-linked (GlcNAc...) asparagine). Repeat 2 spans residues 330-337; that stretch reads SSSNVSTC.

This sequence belongs to the glycosyltransferase 29 family. Heart, kidney, testes, brain, liver and lung.

It is found in the golgi apparatus membrane. It carries out the reaction a beta-D-galactosyl-(1-&gt;3)-N-acetyl-alpha-D-galactosaminyl derivative + CMP-N-acetyl-beta-neuraminate = a beta-D-galactosyl-(1-&gt;3)-[N-acetyl-alpha-neuraminyl-(2-&gt;6)]-N-acetyl-alpha-D-galactosaminyl derivative + CMP + H(+). The catalysed reaction is a 3-O-[N-acetyl-alpha-D-galactosaminyl]-L-seryl-[protein] + CMP-N-acetyl-beta-neuraminate = a 3-O-[N-acetyl-alpha-neuraminosyl-(2-&gt;6)-N-acetyl-alpha-D-galactosaminyl]-L-seryl-[protein] + CMP + H(+). The enzyme catalyses a 3-O-[N-acetyl-alpha-D-galactosaminyl]-L-threonyl-[protein] + CMP-N-acetyl-beta-neuraminate = a 3-O-[N-acetyl-alpha-neuraminosyl-(2-&gt;6)-N-acetyl-alpha-D-galactosaminyl]-L-threonyl-[protein] + CMP + H(+). It catalyses the reaction a 3-O-[beta-D-galactosyl-(1-&gt;3)-N-acetyl-alpha-D-galactosaminyl]-L-seryl-[protein] + CMP-N-acetyl-beta-neuraminate = a 3-O-{beta-D-galactosyl-(1-&gt;3)-[N-acetyl-alpha-neuraminosyl-(2-&gt;6)]-N-acetyl-alpha-D-galactosaminyl}-L-seryl-[protein] + CMP + H(+). It carries out the reaction a 3-O-[beta-D-galactosyl-(1-&gt;3)-N-acetyl-alpha-D-galactosaminyl]-L-threonyl-[protein] + CMP-N-acetyl-beta-neuraminate = a 3-O-{beta-D-galactosyl-(1-&gt;3)-[N-acetyl-alpha-neuraminosyl-(2-&gt;6)]-N-acetyl-alpha-D-galactosaminyl}-L-threonyl-[protein] + CMP + H(+). The catalysed reaction is a 3-O-[N-acetyl-alpha-neuraminyl-(2-&gt;3)-beta-D-galactosyl-(1-&gt;3)-N-acetyl-alpha-D-galactosaminyl]-L-threonyl-[protein] + CMP-N-acetyl-beta-neuraminate = a 3-O-{alpha-Neu5Ac-(2-&gt;3)-beta-D-Gal-(1-&gt;3)-[alpha-Neu5Ac-(2-&gt;6)]-alpha-D-GalNAc}-L-threonyl-[protein] + CMP + H(+). Its pathway is protein modification; protein glycosylation. Its function is as follows. Protein sialyltransferase specifically expressed in goblet cells that plays a key role in intestinal host-commensal homeostasis. Conjugates sialic acid with an alpha-2-6 linkage to N-acetylgalactosamine (GalNAc) glycan chains linked to serine or threonine in glycoproteins. Generates sialylated T and Tn antigens.. This chain is Alpha-N-acetylgalactosaminide alpha-2,6-sialyltransferase 1 (ST6GALNAC1), found in Gallus gallus (Chicken).